The sequence spans 252 residues: 5'-nucleotidase SurE (252 aa).

4 residues coordinate a divalent metal cation: Asp-8, Asp-9, Ser-39, and Asn-91.

Belongs to the SurE nucleotidase family. It depends on a divalent metal cation as a cofactor.

It is found in the cytoplasm. It carries out the reaction a ribonucleoside 5'-phosphate + H2O = a ribonucleoside + phosphate. Its function is as follows. Nucleotidase that shows phosphatase activity on nucleoside 5'-monophosphates. This chain is 5'-nucleotidase SurE, found in Geobacter metallireducens (strain ATCC 53774 / DSM 7210 / GS-15).